The primary structure comprises 252 residues: Ribosomal RNA large subunit methyltransferase E (252 aa).

S-adenosyl-L-methionine contacts are provided by Gly-48, Trp-50, Asp-68, Asp-84, and Asp-107. Lys-147 acts as the Proton acceptor in catalysis. One can recognise a TRAM domain in the interval 194 to 252 (PVREGDTLEVEIDNLGDEGDGVAKVDGYTLFVSGAEPGDAPEVRVTDVKPRFGFAETLE).

It belongs to the class I-like SAM-binding methyltransferase superfamily. RNA methyltransferase RlmE family.

The protein localises to the cytoplasm. It carries out the reaction uridine(2552) in 23S rRNA + S-adenosyl-L-methionine = 2'-O-methyluridine(2552) in 23S rRNA + S-adenosyl-L-homocysteine + H(+). Functionally, specifically methylates the uridine in position 2552 of 23S rRNA at the 2'-O position of the ribose in the fully assembled 50S ribosomal subunit. The protein is Ribosomal RNA large subunit methyltransferase E of Natronomonas pharaonis (strain ATCC 35678 / DSM 2160 / CIP 103997 / JCM 8858 / NBRC 14720 / NCIMB 2260 / Gabara) (Halobacterium pharaonis).